A 156-amino-acid chain; its full sequence is Holliday junction resolvase (156 aa).

This sequence belongs to the RuvC family. Poxviruses-type subfamily. Mg(2+) is required as a cofactor.

In terms of biological role, nuclease that specifically cleaves and resolves four-way DNA Holliday junctions into linear duplex products. This Vertebrata (FPV) protein is Holliday junction resolvase.